A 78-amino-acid polypeptide reads, in one-letter code: Putative membrane protein insertion efficiency factor (78 aa).

The protein belongs to the UPF0161 family.

Its subcellular location is the cell membrane. Functionally, could be involved in insertion of integral membrane proteins into the membrane. The sequence is that of Putative membrane protein insertion efficiency factor from Bacillus thuringiensis subsp. konkukian (strain 97-27).